The chain runs to 636 residues: Dehydrogenase ARMGADRAFT_1018426 (636 aa).

Residues 1 to 19 form the signal peptide; the sequence is MPALTYLLLAAIGASTVHS. FAD is bound by residues 49 to 50 and 70 to 71; these read TA and EG. N-linked (GlcNAc...) asparagine glycosylation occurs at Asn-99. FAD contacts are provided by residues Trp-104 and 134-137; that span reads NGLT. An N-linked (GlcNAc...) asparagine glycan is attached at Asn-253. Val-280 lines the FAD pocket. 4 N-linked (GlcNAc...) asparagine glycosylation sites follow: Asn-333, Asn-380, Asn-394, and Asn-498. The Proton acceptor role is filled by His-570. FAD contacts are provided by residues Ala-603 and 614-615; that span reads PS.

The protein belongs to the GMC oxidoreductase family. Requires FAD as cofactor.

It participates in secondary metabolite biosynthesis. Functionally, dehydrogenase, part of the gene cluster that mediates the biosynthesis of melleolides, a range of antifungal and phytotoxic polyketide derivatives composed of an orsellinic acid (OA) moiety esterified to various sesquiterpene alcohols. The first step in melleolides biosynthesis is performed by the delta(6)-protoilludene synthase PRO1 which catalyzes the cyclization of farnesyl diphosphate to protoilludene. The orsellinic acid synthase armB produces OA by condensing acetyl-CoA with 3 malonyl-CoA units in a three-round chain elongation reaction folowed by a C2-C7 ring closure. ArmB further catalyzes the trans-esterification of OA to the various sesquiterpene alcohols resulting from the hydroxylation of protoilludene. The melleolides cluster also includes 5 cytochrome P450 monooxygenases, 4 NAD(+)-dependent oxidoreductases, one flavin-dependent oxidoreductase, and one O-methyltransferase. The cytochrome P450 monooxygenases may be involved in protoilludene hydroxylation to elaborate melleolides with multiple alcohol groups, such as melleolide D, which carries alcohol functionalities at C-4, C-5, C-10, and C-13. The role of the NAD(+)-dependent enzymes remains unknown. Numerous melleolides, including arnamial, show 5'-O-methylation of the aromatic moiety which may be catalyzed by the methyltransferase encoded in the cluster. The flavin-dependent oxidoreductase might represent the dehydrogenase yielding the aldehyde in position 1 of arnamial and other melleolides. Finally, several halogenase localized outside of the cluster, are able to catalyze the transfer of a single chlorine atom to the melleolide backbone, resulting in a 6'-chloromelleolide product. In Armillaria gallica (Bulbous honey fungus), this protein is Dehydrogenase ARMGADRAFT_1018426.